Consider the following 186-residue polypeptide: Type 1 phosphatases regulator ypi-1 (186 aa).

A compositionally biased stretch (polar residues) spans 1-32 (MTSVAQRQAQPAQPSTSQTAAPTRTQTETSSP). Residues 1 to 186 (MTSVAQRQAQ…SETQGPGGSK (186 aa)) are disordered. Over residues 82–94 (DSSSSSDSSSSSD) the composition is skewed to low complexity. The segment covering 122–137 (HDHDHDGREGGCNHDH) has biased composition (basic and acidic residues). Residues 138 to 151 (GRGRKHGNKGKKTE) show a composition bias toward basic residues.

This sequence belongs to the YPI1 family.

Its subcellular location is the nucleus. Regulator of type 1 phosphatases which maintains protein phosphatase activity under strict control. The polypeptide is Type 1 phosphatases regulator ypi-1 (ypi-1) (Neurospora crassa (strain ATCC 24698 / 74-OR23-1A / CBS 708.71 / DSM 1257 / FGSC 987)).